The primary structure comprises 344 residues: Dihydroorotase (344 aa).

His-13 and His-15 together coordinate Zn(2+). Substrate-binding positions include 15–17 and Asn-41; that span reads HLR. Residues Lys-98, His-135, and His-173 each coordinate Zn(2+). Position 98 is an N6-carboxylysine (Lys-98). Substrate is bound at residue His-135. Leu-218 provides a ligand contact to substrate. Zn(2+) is bound at residue Asp-247. Asp-247 is a catalytic residue. The substrate site is built by His-251 and Ala-263.

It belongs to the metallo-dependent hydrolases superfamily. DHOase family. Class II DHOase subfamily. In terms of assembly, homodimer. Zn(2+) is required as a cofactor.

It catalyses the reaction (S)-dihydroorotate + H2O = N-carbamoyl-L-aspartate + H(+). It functions in the pathway pyrimidine metabolism; UMP biosynthesis via de novo pathway; (S)-dihydroorotate from bicarbonate: step 3/3. Its function is as follows. Catalyzes the reversible cyclization of carbamoyl aspartate to dihydroorotate. This chain is Dihydroorotase, found in Neisseria meningitidis serogroup C (strain 053442).